The primary structure comprises 365 residues: tRNA/tmRNA (uracil-C(5))-methyltransferase (365 aa).

S-adenosyl-L-methionine-binding residues include glutamine 189, tyrosine 217, asparagine 222, glutamate 238, and aspartate 298. Cysteine 323 acts as the Nucleophile in catalysis. Glutamate 357 serves as the catalytic Proton acceptor.

This sequence belongs to the class I-like SAM-binding methyltransferase superfamily. RNA M5U methyltransferase family. TrmA subfamily.

The enzyme catalyses uridine(54) in tRNA + S-adenosyl-L-methionine = 5-methyluridine(54) in tRNA + S-adenosyl-L-homocysteine + H(+). It carries out the reaction uridine(341) in tmRNA + S-adenosyl-L-methionine = 5-methyluridine(341) in tmRNA + S-adenosyl-L-homocysteine + H(+). In terms of biological role, dual-specificity methyltransferase that catalyzes the formation of 5-methyluridine at position 54 (m5U54) in all tRNAs, and that of position 341 (m5U341) in tmRNA (transfer-mRNA). In Shewanella frigidimarina (strain NCIMB 400), this protein is tRNA/tmRNA (uracil-C(5))-methyltransferase.